The following is a 303-amino-acid chain: UDP-3-O-acyl-N-acetylglucosamine deacetylase (303 aa).

The Zn(2+) site is built by H78, H237, and D241. Catalysis depends on H264, which acts as the Proton donor.

It belongs to the LpxC family. Requires Zn(2+) as cofactor.

It catalyses the reaction a UDP-3-O-[(3R)-3-hydroxyacyl]-N-acetyl-alpha-D-glucosamine + H2O = a UDP-3-O-[(3R)-3-hydroxyacyl]-alpha-D-glucosamine + acetate. The protein operates within glycolipid biosynthesis; lipid IV(A) biosynthesis; lipid IV(A) from (3R)-3-hydroxytetradecanoyl-[acyl-carrier-protein] and UDP-N-acetyl-alpha-D-glucosamine: step 2/6. In terms of biological role, catalyzes the hydrolysis of UDP-3-O-myristoyl-N-acetylglucosamine to form UDP-3-O-myristoylglucosamine and acetate, the committed step in lipid A biosynthesis. The polypeptide is UDP-3-O-acyl-N-acetylglucosamine deacetylase (Coxiella burnetii (strain CbuK_Q154) (Coxiella burnetii (strain Q154))).